The sequence spans 264 residues: Glutamate racemase (264 aa).

Substrate-binding positions include 10–11 (DS) and 42–43 (YG). Residue Cys-73 is the Proton donor/acceptor of the active site. 74 to 75 (NT) serves as a coordination point for substrate. Cys-183 (proton donor/acceptor) is an active-site residue. Position 184-185 (184-185 (TH)) interacts with substrate.

This sequence belongs to the aspartate/glutamate racemases family.

It catalyses the reaction L-glutamate = D-glutamate. Its pathway is cell wall biogenesis; peptidoglycan biosynthesis. Functionally, provides the (R)-glutamate required for cell wall biosynthesis. This is Glutamate racemase from Streptococcus agalactiae serotype Ia (strain ATCC 27591 / A909 / CDC SS700).